Reading from the N-terminus, the 144-residue chain is Maximins 10/H3 (144 aa).

The signal sequence occupies residues 1–18; sequence MNFKYIVAVSFLIASAYA. The propeptide occupies 19–43; the sequence is RSVKNDEQSLSQRDVLDEESLREFR. Ser-70 is modified (serine amide). A propeptide spanning residues 74-123 is cleaved from the precursor; it reads TAEDHEVMKRLEAVMRDLDSLDYPEEATERETRGFNQEEIANLFTKKEKR. Ile-143 is subject to Isoleucine amide.

Belongs to the bombinin family. Expressed by the skin glands.

Its subcellular location is the secreted. In terms of biological role, maximin-10 shows antimicrobial activity against bacteria and against the fungus C.albicans. It has little hemolytic activity. Functionally, maximin-H3 shows antibacterial activity against both Gram-positive and Gram-negative bacteria. It also shows antimicrobial activity against the fungus C.albicans. Shows strong hemolytic activity. This chain is Maximins 10/H3, found in Bombina maxima (Giant fire-bellied toad).